The following is a 424-amino-acid chain: Virion nicking-joining enzyme (424 aa).

PLD phosphodiesterase domains are found at residues 110–137 (LGGV…DWRS) and 320–346 (YSRV…TGNY).

The protein belongs to the orthopoxvirus OPG042 family.

It is found in the virion. Functionally, DNA nicking enzyme that cleaves extruded cruciform DNA at its tip. Probably nicks viral hairpins. The polypeptide is Virion nicking-joining enzyme (OPG042) (Homo sapiens (Human)).